We begin with the raw amino-acid sequence, 100 residues long: Insertion element IS600 uncharacterized 11 kDa protein (100 aa).

Belongs to the transposase 8 family.

This is Insertion element IS600 uncharacterized 11 kDa protein from Shigella sonnei.